Reading from the N-terminus, the 384-residue chain is Zinc finger protein GLIS2 homolog (384 aa).

The segment at 128-153 adopts a C2H2-type 1 zinc-finger fold; the sequence is FVCNWTDCDRVFDTLDALAQHVTQRH. The C2H2-type 2; degenerate zinc-finger motif lies at 163–190; sequence YYCRWRGCQRSERGFNARYKMLVHTRTH. 3 consecutive C2H2-type zinc fingers follow at residues 196 to 218, 224 to 248, and 254 to 280; these read HRCHLCEKSFSRAENLKIHIRSH, YKCSFEGCQKAYSNSSDRFKHTRTH, and YMCKVAGCQKRYTDPSSLRKHVKTFKH. Residues 321 to 343 are disordered; that stretch reads SSSSARYYDDSNNEPSDYSLKPK.

This sequence belongs to the GLI C2H2-type zinc-finger protein family.

The protein localises to the nucleus. Transcription factor which represses a set of lipase genes involved in fat catabolism. The polypeptide is Zinc finger protein GLIS2 homolog (sug) (Drosophila melanogaster (Fruit fly)).